Consider the following 362-residue polypeptide: Leucoanthocyanidin dioxygenase (362 aa).

Residues 1-23 (MVTSAMGPSPRVEELARSGLDTI) are disordered. Residues 214–313 (LIVQMKINFY…RISWAVFCEP (100 aa)) form the Fe2OG dioxygenase domain. 3 residues coordinate Fe cation: histidine 238, aspartate 240, and histidine 294. Residue arginine 304 is part of the active site.

Belongs to the iron/ascorbate-dependent oxidoreductase family. The cofactor is Fe cation. L-ascorbate is required as a cofactor. In terms of tissue distribution, expressed in red but not in green forma of P.frutescens. In red forma, it is predominantly expressed in stems and leaves, but not in roots.

The catalysed reaction is a (2R,3S,4S)-leucoanthocyanidin + 2-oxoglutarate + O2 = a 4-H-anthocyanidin with a 3-hydroxy group + succinate + CO2 + 2 H2O. The protein operates within pigment biosynthesis; anthocyanin biosynthesis. Oxidation of leucoanthocyanidins into anthocyanidins. The chain is Leucoanthocyanidin dioxygenase (ANS) from Perilla frutescens (Beefsteak mint).